The chain runs to 101 residues: uncharacterized protein (101 aa).

The protein localises to the mitochondrion. This is an uncharacterized protein from Arabidopsis thaliana (Mouse-ear cress).